We begin with the raw amino-acid sequence, 109 residues long: Cell division suppressor protein YneA (109 aa).

One can recognise a LysM domain in the interval 39–90 (SEVNVSEGDSLWALADQYAGKSDMAKADFVSWVEKENNLADGHVEAGESVVI).

Belongs to the YneA family.

The protein resides in the cytoplasm. Functionally, inhibits cell division during the SOS response. Affects a later stage of the cell division protein assembly, after the assembly of the Z ring, by probably suppressing recruitment of FtsL and/or DivIC to the division machinery. The chain is Cell division suppressor protein YneA from Listeria monocytogenes serotype 4b (strain F2365).